A 327-amino-acid polypeptide reads, in one-letter code: UPF0285 protein Maeo_0978 (327 aa).

It belongs to the UPF0285 family.

The chain is UPF0285 protein Maeo_0978 from Methanococcus aeolicus (strain ATCC BAA-1280 / DSM 17508 / OCM 812 / Nankai-3).